A 90-amino-acid chain; its full sequence is Probable Fe(2+)-trafficking protein (90 aa).

Belongs to the Fe(2+)-trafficking protein family.

In terms of biological role, could be a mediator in iron transactions between iron acquisition and iron-requiring processes, such as synthesis and/or repair of Fe-S clusters in biosynthetic enzymes. The protein is Probable Fe(2+)-trafficking protein of Coxiella burnetii (strain CbuG_Q212) (Coxiella burnetii (strain Q212)).